Here is an 85-residue protein sequence, read N- to C-terminus: Toxin BmKaTx10 (85 aa).

An N-terminal signal peptide occupies residues 1-19 (MNYLVMVSFALLLMTGVES). The region spanning 21–83 (RDGYIALPHN…VPIRVPGRCH (63 aa)) is the LCN-type CS-alpha/beta domain. Cystine bridges form between C31-C82, C35-C55, C41-C65, and C45-C67.

This sequence belongs to the long (4 C-C) scorpion toxin superfamily. Sodium channel inhibitor family. Alpha subfamily. As to expression, expressed by the venom gland.

The protein localises to the secreted. In terms of biological role, alpha toxins bind voltage-independently at site-3 of sodium channels (Nav) and inhibit the inactivation of the activated channels, thereby blocking neuronal transmission. This chain is Toxin BmKaTx10, found in Olivierus martensii (Manchurian scorpion).